Consider the following 529-residue polypeptide: Putative UPF0481 protein At3g02645 (529 aa).

Residues asparagine 365 and asparagine 403 are each glycosylated (N-linked (GlcNAc...) asparagine). The chain crosses the membrane as a helical span at residues 498-518 (ILAFLAAVLLLMLVSLQLFSL).

It belongs to the UPF0481 family.

It localises to the membrane. In Arabidopsis thaliana (Mouse-ear cress), this protein is Putative UPF0481 protein At3g02645.